A 313-amino-acid chain; its full sequence is Ribosomal RNA small subunit methyltransferase H (313 aa).

S-adenosyl-L-methionine is bound by residues 35–37 (GGH), Asp55, Phe79, Asp100, and Gln107.

The protein belongs to the methyltransferase superfamily. RsmH family.

It is found in the cytoplasm. It catalyses the reaction cytidine(1402) in 16S rRNA + S-adenosyl-L-methionine = N(4)-methylcytidine(1402) in 16S rRNA + S-adenosyl-L-homocysteine + H(+). In terms of biological role, specifically methylates the N4 position of cytidine in position 1402 (C1402) of 16S rRNA. This Burkholderia pseudomallei (strain K96243) protein is Ribosomal RNA small subunit methyltransferase H.